We begin with the raw amino-acid sequence, 1035 residues long: Electrogenic sodium bicarbonate cotransporter 1 (1035 aa).

The Cytoplasmic portion of the chain corresponds to 1–421 (MSSEKECLEN…FASDFYDALS (421 aa)). Residues 192-217 (SRLFSTPDNGSPTMTHRNLTSTSLND) show a composition bias toward polar residues. Disordered stretches follow at residues 192–222 (SRLF…SDKP) and 348–389 (IEPP…GDSE). Basic and acidic residues predominate over residues 376–389 (APHDDGGGGHGDSE). Residues 422–446 (IQSLSAILFIYLGTVTNAITFGGLL) form a helical membrane-spanning segment. At 447-456 (GDATENMQGV) the chain is on the extracellular side. Residues 457–475 (LESFLGTAVSGAVFCLFGG) traverse the membrane as a helical segment. Q476 is a topological domain (cytoplasmic). The chain crosses the membrane as a discontinuously helical span at residues 477-497 (PLTILSSTGPVLVFERLLFNF). Over 498–505 (SKDNDFDY) the chain is Extracellular. The chain crosses the membrane as a helical span at residues 506-526 (LEFRLWIGLWSAFQCLILVAT). Over 527-540 (DASFLVKYFTRFTE) the chain is Cytoplasmic. The chain crosses the membrane as a helical span at residues 541-564 (EGFSSLISFIFIYDAFKKMIKLAD). Residues 565-648 (YYPINSHFKV…GSNCKYVPDI (84 aa)) are Extracellular-facing. N-linked (GlcNAc...) asparagine glycosylation is found at N591, N596, N609, and N617. Residues 649–666 (TLMSFILFLGTYTCSMAL) traverse the membrane as a helical segment. Residues 667 to 681 (KKFKTSRYFPTTARK) lie on the Cytoplasmic side of the membrane. The helical transmembrane segment at 682–701 (LISDFAIILSILIFCGLDAL) threads the bilayer. Residues 702–735 (LGVDTPKLIVPSEFKPTSPNRGWFVPPFGGNPWW) lie on the Extracellular side of the membrane. Residues 736 to 763 (VYLAAAIPALLVTILIFMDQQITGVIVN) form a helical membrane-spanning segment. At 764–775 (RKEHKLKKGAGY) the chain is on the cytoplasmic side. Residues 776–792 (HLDLFWVAILMVVCSFM) form a helical membrane-spanning segment. A topological domain (extracellular) is located at residue A793. Residues 794 to 811 (LPWYVAATVISIAHIDSL) form a discontinuously helical membrane-spanning segment. At 812-833 (KMETETSAPGEQPKFLGVREQR) the chain is on the cytoplasmic side. The chain crosses the membrane as a helical span at residues 834-850 (VTGTVVFLLTGLSVFMA). The Extracellular segment spans residues 851–857 (PILKFIP). A helical transmembrane segment spans residues 858 to 874 (MPVLYGVFLYMGVASLN). Residues 875–916 (GVQFMDRLKLLLMPPKYQPDFIYLRHVPLRRVHLFTFLQVVC) are Cytoplasmic-facing. Positions 917 to 942 (LAMLWILKSTVAAIIFPVMILALVAV) form an intramembrane region, discontinuously helical. At 943–1035 (RKAMDYFFSQ…PTFLERHTSC (93 aa)) the chain is on the cytoplasmic side. The tract at residues 968 to 1035 (KKKEDEKKKK…PTFLERHTSC (68 aa)) is disordered. Basic and acidic residues predominate over residues 1007–1035 (IMEKEPFLIDSKPSDRENSPTFLERHTSC).

This sequence belongs to the anion exchanger (TC 2.A.31) family. As to quaternary structure, homodimer. Expressed in kidney and to a lower extent in bladder, brain, intestine, large intestine and eye.

The protein resides in the basolateral cell membrane. The protein localises to the cell membrane. The enzyme catalyses 2 hydrogencarbonate(out) + Na(+)(out) = 2 hydrogencarbonate(in) + Na(+)(in). It carries out the reaction 3 hydrogencarbonate(out) + Na(+)(out) = 3 hydrogencarbonate(in) + Na(+)(in). Electrogenic sodium/bicarbonate cotransporter with a Na(+):HCO3(-) stoichiometry varying from 1:2 to 1:3. May regulate bicarbonate influx/efflux at the basolateral membrane of cells and regulate intracellular pH. The sequence is that of Electrogenic sodium bicarbonate cotransporter 1 (SLC4A4) from Ambystoma tigrinum (Eastern tiger salamander).